Reading from the N-terminus, the 172-residue chain is Peptide methionine sulfoxide reductase MsrA 2 (172 aa).

Cys-12 is an active-site residue.

Belongs to the MsrA Met sulfoxide reductase family.

It catalyses the reaction L-methionyl-[protein] + [thioredoxin]-disulfide + H2O = L-methionyl-(S)-S-oxide-[protein] + [thioredoxin]-dithiol. The catalysed reaction is [thioredoxin]-disulfide + L-methionine + H2O = L-methionine (S)-S-oxide + [thioredoxin]-dithiol. Has an important function as a repair enzyme for proteins that have been inactivated by oxidation. Catalyzes the reversible oxidation-reduction of methionine sulfoxide in proteins to methionine. This Lactococcus lactis subsp. lactis (strain IL1403) (Streptococcus lactis) protein is Peptide methionine sulfoxide reductase MsrA 2 (msrA2).